Reading from the N-terminus, the 86-residue chain is CLAVATA3/ESR (CLE)-related protein 8 (86 aa).

An N-terminal signal peptide occupies residues methionine 1–alanine 24. The disordered stretch occupies residues aspartate 43–asparagine 86. Proline 64 and proline 67 each carry hydroxyproline. Proline 67 carries an O-linked (Ara...) hydroxyproline glycan.

This sequence belongs to the CLV3/ESR signal peptide family. In terms of processing, the O-glycosylation (arabinosylation) of the hydroxyproline Pro-67 enhances binding affinity of the CLE8p peptide for its receptor. Mostly expressed in siliques, and, to a lower extent, in flowers. Expressed in young embryos and endosperm.

It is found in the secreted. It localises to the extracellular space. Functionally, extracellular signal peptide that regulates cell fate. Represses root apical meristem maintenance. Positively regulates the expression of the transcription factor WOX8 and thus, regulates early embryo development. Regulates the transition of protophloem cells from proliferation to differentiation, thus impinging on postembryonic growth capacity of the root meristem; this signaling pathway requires CRN and CLV2. This chain is CLAVATA3/ESR (CLE)-related protein 8, found in Arabidopsis thaliana (Mouse-ear cress).